The following is a 163-amino-acid chain: MTTFLGNPVTFTGKQLQVGDTAHDFSLTATDLSKKTLADFAGKKKVLSIIPSIDTGVCSTQTRRFNQELSDLDNTVVITVSVDLPFAQGKWCAAEGIENAVMLSDYFDHSFGRDYAVLINEWHLLARAVLVLDENNTVTYAEYVDNINTEPDYDAAIAAVKNL.

Residues 16 to 162 enclose the Thioredoxin domain; sequence LQVGDTAHDF…YDAAIAAVKN (147 aa). The active-site Cysteine sulfenic acid (-SOH) intermediate is Cys-58. Cys-58 and Cys-92 are oxidised to a cystine.

Belongs to the peroxiredoxin family. Tpx subfamily. As to quaternary structure, homodimer.

The enzyme catalyses a hydroperoxide + [thioredoxin]-dithiol = an alcohol + [thioredoxin]-disulfide + H2O. In terms of biological role, thiol-specific peroxidase that catalyzes the reduction of hydrogen peroxide and organic hydroperoxides to water and alcohols, respectively. Plays a role in cell protection against oxidative stress by detoxifying peroxides. The protein is Thiol peroxidase of Streptococcus gordonii.